Consider the following 82-residue polypeptide: Mitotic-spindle organizing protein 1 (82 aa).

The residue at position 2 (A2) is an N-acetylalanine.

Belongs to the MOZART1 family. Associates with the gamma-tubulin ring complex (gTuRC) consisting of TUBGCP2, TUBGCP3, TUBGCP4, TUBGCP5 and TUBGCP6 and gamma-tubulin TUBG1 or TUBG2; within the complex, interacts with TUBGCP3 and TUBGCP6 to form a luminal bridge with actin that stabilizes the initial structure during complex assembly. Interacts with TUBG1.

It localises to the cytoplasm. Its subcellular location is the cytoskeleton. The protein localises to the microtubule organizing center. It is found in the centrosome. The protein resides in the spindle. Functionally, required for the recruitment and the assembly of the gamma-tubulin ring complex (gTuRC) at the centrosome. The gTuRC regulates the minus-end nucleation of alpha-beta tubulin heterodimers that grow into microtubule protafilaments, a critical step in centrosome duplication and spindle formation. The polypeptide is Mitotic-spindle organizing protein 1 (MZT1) (Homo sapiens (Human)).